The sequence spans 533 residues: Suppressor of cytokine signaling 6 (533 aa).

Disordered regions lie at residues 54 to 136 (CDIG…WPLR) and 177 to 199 (ELRD…PGDL). Basic and acidic residues predominate over residues 59 to 69 (EDEKGKNRSKS). The segment covering 76-88 (LKRRLSAKQKTKG) has biased composition (basic residues). The span at 177-189 (ELRDLQPEPRPES) shows a compositional bias: basic and acidic residues. Residues 382 to 489 (WYWGPITRWE…TYPVRLTNPV (108 aa)) enclose the SH2 domain. The 50-residue stretch at 484–533 (RLTNPVSRFMQVRSLQYLCRFVIRQYTRIDLIQKLPLPNKMKDYLQEKHY) folds into the SOCS box domain.

In terms of assembly, interacts with KIT (phosphorylated). Interacts with RBCK1. Interacts with phosphorylated IRS4. Interacts with PIM3.

Its pathway is protein modification; protein ubiquitination. Its function is as follows. SOCS family proteins form part of a classical negative feedback system that regulates cytokine signal transduction. May be a substrate recognition component of a SCF-like ECS (Elongin BC-CUL2/5-SOCS-box protein) E3 ubiquitin-protein ligase complex which mediates the ubiquitination and subsequent proteasomal degradation of target proteins. Regulates KIT degradation by ubiquitination of the tyrosine-phosphorylated receptor. In Mus musculus (Mouse), this protein is Suppressor of cytokine signaling 6 (Socs6).